The primary structure comprises 281 residues: 4-diphosphocytidyl-2-C-methyl-D-erythritol kinase (281 aa).

Residues lysine 11 and aspartate 138 contribute to the active site.

This sequence belongs to the GHMP kinase family. IspE subfamily.

It catalyses the reaction 4-CDP-2-C-methyl-D-erythritol + ATP = 4-CDP-2-C-methyl-D-erythritol 2-phosphate + ADP + H(+). It functions in the pathway isoprenoid biosynthesis; isopentenyl diphosphate biosynthesis via DXP pathway; isopentenyl diphosphate from 1-deoxy-D-xylulose 5-phosphate: step 3/6. Functionally, catalyzes the phosphorylation of the position 2 hydroxy group of 4-diphosphocytidyl-2C-methyl-D-erythritol. This chain is 4-diphosphocytidyl-2-C-methyl-D-erythritol kinase, found in Pelagibacter ubique (strain HTCC1062).